A 385-amino-acid polypeptide reads, in one-letter code: UDP-N-acetylglucosamine--N-acetylmuramyl-(pentapeptide) pyrophosphoryl-undecaprenol N-acetylglucosamine transferase (385 aa).

Residues 24 to 26 (TAG), Asn-143, Arg-180, Ser-214, and Gln-310 each bind UDP-N-acetyl-alpha-D-glucosamine.

Belongs to the glycosyltransferase 28 family. MurG subfamily.

Its subcellular location is the cell membrane. The enzyme catalyses di-trans,octa-cis-undecaprenyl diphospho-N-acetyl-alpha-D-muramoyl-L-alanyl-D-glutamyl-meso-2,6-diaminopimeloyl-D-alanyl-D-alanine + UDP-N-acetyl-alpha-D-glucosamine = di-trans,octa-cis-undecaprenyl diphospho-[N-acetyl-alpha-D-glucosaminyl-(1-&gt;4)]-N-acetyl-alpha-D-muramoyl-L-alanyl-D-glutamyl-meso-2,6-diaminopimeloyl-D-alanyl-D-alanine + UDP + H(+). Its pathway is cell wall biogenesis; peptidoglycan biosynthesis. Its function is as follows. Cell wall formation. Catalyzes the transfer of a GlcNAc subunit on undecaprenyl-pyrophosphoryl-MurNAc-pentapeptide (lipid intermediate I) to form undecaprenyl-pyrophosphoryl-MurNAc-(pentapeptide)GlcNAc (lipid intermediate II). This chain is UDP-N-acetylglucosamine--N-acetylmuramyl-(pentapeptide) pyrophosphoryl-undecaprenol N-acetylglucosamine transferase, found in Mycolicibacterium smegmatis (strain ATCC 700084 / mc(2)155) (Mycobacterium smegmatis).